A 424-amino-acid chain; its full sequence is Tyrosine--tRNA ligase (424 aa).

Tyr-37 contributes to the L-tyrosine binding site. The 'HIGH' region motif lies at 42 to 51 (PTADSLHLGH). The L-tyrosine site is built by Tyr-175 and Gln-179. The 'KMSKS' region signature appears at 235–239 (KFGKT). Position 238 (Lys-238) interacts with ATP. An S4 RNA-binding domain is found at 357-414 (ADLQQALVNAELVPSRGQARTMIGSNAVAINGEKQADPEYVFTDADRLFGRYTLLRRG).

This sequence belongs to the class-I aminoacyl-tRNA synthetase family. TyrS type 1 subfamily. Homodimer.

The protein localises to the cytoplasm. It catalyses the reaction tRNA(Tyr) + L-tyrosine + ATP = L-tyrosyl-tRNA(Tyr) + AMP + diphosphate + H(+). Functionally, catalyzes the attachment of tyrosine to tRNA(Tyr) in a two-step reaction: tyrosine is first activated by ATP to form Tyr-AMP and then transferred to the acceptor end of tRNA(Tyr). This Yersinia pseudotuberculosis serotype O:1b (strain IP 31758) protein is Tyrosine--tRNA ligase.